Reading from the N-terminus, the 681-residue chain is MKTTCLLISLILIQGVKTLPILEIASNIQPQNVDSVCSGTLQKTEDVHLMGFTLSGQKVADSPLEASKRWAFRAGVPPKNVEYTEGEEAKTCYNISVTDPSGKSLLLDPPTNIRDYPKCKTIHHIQGQNPHAQGIALHLWGAFFLYDRIASTTMYRGKVFTEGNIAAMIVNKTVHKMIFSRQGQGYRHMNLTSTNKYWTSSNGTQTNDTGCFGTLQEYNSTKNQTCAPSKKPLPLPTAHPEVKLTSTSTDATKLNTTDPNSDDEDLTTSGSGSGEQEPYTTSDAATKQGLSSTMPPTPSPQPSTPQQGGNNTNHSQGVVTEPGKTNTTAQPSMPPHNTTTISTNNTSKHNLSTPSVPIQNATNYNTQSTAPENEQTSAPSKTTLLPTENPTTAKSTNSTKSPTTTVPNTTNKYSTSPSPTPNSTAQHLVYFRRKRNILWREGDMFPFLDGLINAPIDFDPVPNTKTIFDESSSSGASAEEDQHASPNISLTLSYFPKVNENTAHSGENENDCDAELRIWSVQEDDLAAGLSWIPFFGPGIEGLYTAGLIKNQNNLVCRLRRLANQTAKSLELLLRVTTEERTFSLINRHAIDFLLARWGGTCKVLGPDCCIGIEDLSRNISEQIDQIKKDEQKEGTGWGLGGKWWTSDWGVLTNLGILLLLSIAVLIALSCICRIFTKYIG.

The first 18 residues, 1-18 (MKTTCLLISLILIQGVKT), serve as a signal peptide directing secretion. The Extracellular segment spans residues 19–648 (LPILEIASNI…GLGGKWWTSD (630 aa)). Residues 38-188 (SGTLQKTEDV…FSRQGQGYRH (151 aa)) are receptor-binding. Residues asparagine 94, asparagine 171, asparagine 190, asparagine 202, asparagine 207, asparagine 219, asparagine 223, and asparagine 255 are each glycosylated (N-linked (GlcNAc...) asparagine; by host). The interval 222–424 (KNQTCAPSKK…TSPSPTPNST (203 aa)) is disordered. Polar residues-rich tracts occupy residues 244-259 (LTST…TTDP), 278-290 (PYTT…KQGL), and 308-331 (GGNN…TAQP). Residues 277-455 (EPYTTSDAAT…PFLDGLINAP (179 aa)) are mucin-like region. N-linked (GlcNAc...) asparagine; by host glycosylation is found at asparagine 310, asparagine 313, asparagine 326, asparagine 337, asparagine 344, asparagine 345, asparagine 350, asparagine 360, asparagine 397, asparagine 408, asparagine 422, and asparagine 487. Over residues 337 to 347 (NTTTISTNNTS) the composition is skewed to low complexity. Residues 348-388 (KHNLSTPSVPIQNATNYNTQSTAPENEQTSAPSKTTLLPTE) are compositionally biased toward polar residues. Over residues 389-424 (NPTTAKSTNSTKSPTTTVPNTTNKYSTSPSPTPNST) the composition is skewed to low complexity. Residues 529-549 (GLSWIPFFGPGIEGLYTAGLI) are fusion peptide. N-linked (GlcNAc...) asparagine; by host glycosylation is found at asparagine 564 and asparagine 619. The helical transmembrane segment at 649–669 (WGVLTNLGILLLLSIAVLIAL) threads the bilayer. Topologically, residues 670 to 681 (SCICRIFTKYIG) are cytoplasmic. S-palmitoyl cysteine; by host attachment occurs at residues cysteine 671 and cysteine 673.

The protein belongs to the filoviruses glycoprotein family. Homotrimer; each monomer consists of a GP1 and a GP2 subunit linked by disulfide bonds. The resulting peplomers (GP1,2) protrude from the virus surface as spikes. GP1,2 interacts with human CD209 and CLEC4M (collectively referred to as DC-SIGN(R)). Asialoglycoprotein receptor (ASGP-R) may be a liver-specific receptor for GP1,2. Members of the Tyro3 receptor tyrosine kinase family may be cell entry factors interacting with GP1,2. N-glycosylated. Post-translationally, O-glycosylated in the mucin-like region. In terms of processing, specific enzymatic cleavages in vivo yield mature proteins. The precursor is processed into GP1 and GP2 by host cell furin in the trans Golgi, and maybe by other host proteases, to yield the mature GP1 and GP2 proteins. The cleavage site corresponds to the furin optimal cleavage sequence [KR]-X-[KR]-R. GP1 is phosphorylated on serine residues between residues 260 and 273.

The protein localises to the virion membrane. It is found in the host cell membrane. Functionally, GP1 is responsible for binding to the receptor(s) on target cells. Interacts with CD209/DC-SIGN and CLEC4M/DC-SIGNR which act as cofactors for virus entry into the host cell. Binding to CD209 and CLEC4M, which are respectively found on dendritic cells (DCs), and on endothelial cells of liver sinusoids and lymph node sinuses, facilitate infection of macrophages and endothelial cells. These interactions not only facilitate virus cell entry, but also allow capture of viral particles by DCs and subsequent transmission to susceptible cells without DCs infection (trans infection). Its function is as follows. GP2 acts as a class I viral fusion protein. Under the current model, the protein has at least 3 conformational states: pre-fusion native state, pre-hairpin intermediate state, and post-fusion hairpin state. During viral and target cell membrane fusion, the coiled coil regions (heptad repeats) assume a trimer-of-hairpins structure, positioning the fusion peptide in close proximity to the C-terminal region of the ectodomain. The formation of this structure appears to drive apposition and subsequent fusion of viral and target cell membranes. Responsible for penetration of the virus into the cell cytoplasm by mediating the fusion of the membrane of the endocytosed virus particle with the endosomal membrane. Low pH in endosomes induces an irreversible conformational change in GP2, releasing the fusion hydrophobic peptide. The polypeptide is Envelope glycoprotein (GP) (Chlorocebus aethiops (Green monkey)).